The chain runs to 365 residues: tRNA N6-adenosine threonylcarbamoyltransferase (365 aa).

H119 and H123 together coordinate Fe cation. Residues 141 to 145, D174, G187, and N288 each bind substrate; that span reads LVSGG. Position 316 (D316) interacts with Fe cation.

Belongs to the KAE1 / TsaD family. It depends on Fe(2+) as a cofactor.

The protein localises to the cytoplasm. The enzyme catalyses L-threonylcarbamoyladenylate + adenosine(37) in tRNA = N(6)-L-threonylcarbamoyladenosine(37) in tRNA + AMP + H(+). Its function is as follows. Required for the formation of a threonylcarbamoyl group on adenosine at position 37 (t(6)A37) in tRNAs that read codons beginning with adenine. Is involved in the transfer of the threonylcarbamoyl moiety of threonylcarbamoyl-AMP (TC-AMP) to the N6 group of A37, together with TsaE and TsaB. TsaD likely plays a direct catalytic role in this reaction. This Agrobacterium fabrum (strain C58 / ATCC 33970) (Agrobacterium tumefaciens (strain C58)) protein is tRNA N6-adenosine threonylcarbamoyltransferase.